The primary structure comprises 266 residues: Putative peptidyl-prolyl cis-trans isomerase NifM (266 aa).

A PpiC domain is found at 124 to 221; it reads PEQRLTRHLL…LGWHLLWCEA (98 aa).

This sequence belongs to the PpiC/parvulin rotamase family.

The catalysed reaction is [protein]-peptidylproline (omega=180) = [protein]-peptidylproline (omega=0). Functionally, required for the activation and stabilization of the iron-component (NifH) of nitrogenase. Probable PPIase. The chain is Putative peptidyl-prolyl cis-trans isomerase NifM (nifM) from Klebsiella oxytoca.